A 440-amino-acid polypeptide reads, in one-letter code: Endoglucanase B (440 aa).

The signal sequence occupies residues 1 to 33; that stretch reads MNKRLSRGKISLLASVFVTTTFMGGVNVLASTA. E179 acts as the Proton donor in catalysis. E305 functions as the Nucleophile in the catalytic mechanism. A Dockerin domain is found at 381 to 440; the sequence is TSYSLGDVNKDGKVNAIDYAVLKSILLGTNTNVDLSVSDMNKDGKVNALDLAVLKKMLLS.

Belongs to the glycosyl hydrolase 5 (cellulase A) family.

It carries out the reaction Endohydrolysis of (1-&gt;4)-beta-D-glucosidic linkages in cellulose, lichenin and cereal beta-D-glucans.. The enzyme catalyses Endohydrolysis of (1-&gt;4)-beta-D-xylosidic linkages in xylans.. In terms of biological role, has endoglucanase activity on carboxymethyl-cellulose (CMC), xylan and lichenan, but not Avicel. This chain is Endoglucanase B (engB), found in Clostridium cellulovorans (strain ATCC 35296 / DSM 3052 / OCM 3 / 743B).